The primary structure comprises 215 residues: Cytochrome b6 (215 aa).

A helical membrane pass occupies residues 32–52; sequence IFYCLGGITLTCFLVQVATGF. Position 35 (Cys35) interacts with heme c. Residues His86 and His100 each coordinate heme b. 3 consecutive transmembrane segments (helical) span residues 90–110, 116–136, and 186–206; these read ASMM…TGGF, LTWV…VTGY, and LHTF…FPMI. 2 residues coordinate heme b: His187 and His202.

Belongs to the cytochrome b family. PetB subfamily. The 4 large subunits of the cytochrome b6-f complex are cytochrome b6, subunit IV (17 kDa polypeptide, PetD), cytochrome f and the Rieske protein, while the 4 small subunits are PetG, PetL, PetM and PetN. The complex functions as a dimer. Heme b serves as cofactor. Requires heme c as cofactor.

The protein resides in the plastid. It localises to the chloroplast thylakoid membrane. Component of the cytochrome b6-f complex, which mediates electron transfer between photosystem II (PSII) and photosystem I (PSI), cyclic electron flow around PSI, and state transitions. The protein is Cytochrome b6 of Cucumis sativus (Cucumber).